A 529-amino-acid chain; its full sequence is tRNA-2-methylthio-N(6)-dimethylallyladenosine synthase 1 (529 aa).

The disordered stretch occupies residues 1-21 (MTQDHIVTERPPATRNDTAGN). An MTTase N-terminal domain is found at 25–141 (RTYEVRTLGC…LPVLLERSRH (117 aa)). Residues cysteine 34, cysteine 70, cysteine 104, cysteine 178, cysteine 182, and cysteine 185 each coordinate [4Fe-4S] cluster. Residues 164-407 (RDSAYAAWVS…VALQERISLE (244 aa)) enclose the Radical SAM core domain. Positions 410–480 (RSLVGTRQEL…PHHLIADGPL (71 aa)) constitute a TRAM domain. The tract at residues 481–504 (LQHRRTPAGDASERGQTPTTRGVG) is disordered.

Belongs to the methylthiotransferase family. MiaB subfamily. In terms of assembly, monomer. [4Fe-4S] cluster is required as a cofactor.

The protein resides in the cytoplasm. It carries out the reaction N(6)-dimethylallyladenosine(37) in tRNA + (sulfur carrier)-SH + AH2 + 2 S-adenosyl-L-methionine = 2-methylsulfanyl-N(6)-dimethylallyladenosine(37) in tRNA + (sulfur carrier)-H + 5'-deoxyadenosine + L-methionine + A + S-adenosyl-L-homocysteine + 2 H(+). In terms of biological role, catalyzes the methylthiolation of N6-(dimethylallyl)adenosine (i(6)A), leading to the formation of 2-methylthio-N6-(dimethylallyl)adenosine (ms(2)i(6)A) at position 37 in tRNAs that read codons beginning with uridine. This is tRNA-2-methylthio-N(6)-dimethylallyladenosine synthase 1 from Mycobacterium marinum (strain ATCC BAA-535 / M).